An 879-amino-acid polypeptide reads, in one-letter code: Alanine--tRNA ligase (879 aa).

Positions 566, 570, 668, and 672 each coordinate Zn(2+).

It belongs to the class-II aminoacyl-tRNA synthetase family. Requires Zn(2+) as cofactor.

Its subcellular location is the cytoplasm. It carries out the reaction tRNA(Ala) + L-alanine + ATP = L-alanyl-tRNA(Ala) + AMP + diphosphate. Its function is as follows. Catalyzes the attachment of alanine to tRNA(Ala) in a two-step reaction: alanine is first activated by ATP to form Ala-AMP and then transferred to the acceptor end of tRNA(Ala). Also edits incorrectly charged Ser-tRNA(Ala) and Gly-tRNA(Ala) via its editing domain. In Clostridium botulinum (strain Loch Maree / Type A3), this protein is Alanine--tRNA ligase.